The following is a 193-amino-acid chain: ATP-dependent Clp protease proteolytic subunit (193 aa).

Catalysis depends on Ser98, which acts as the Nucleophile. The active site involves His123.

The protein belongs to the peptidase S14 family. Fourteen ClpP subunits assemble into 2 heptameric rings which stack back to back to give a disk-like structure with a central cavity, resembling the structure of eukaryotic proteasomes.

It localises to the cytoplasm. The enzyme catalyses Hydrolysis of proteins to small peptides in the presence of ATP and magnesium. alpha-casein is the usual test substrate. In the absence of ATP, only oligopeptides shorter than five residues are hydrolyzed (such as succinyl-Leu-Tyr-|-NHMec, and Leu-Tyr-Leu-|-Tyr-Trp, in which cleavage of the -Tyr-|-Leu- and -Tyr-|-Trp bonds also occurs).. In terms of biological role, cleaves peptides in various proteins in a process that requires ATP hydrolysis. Has a chymotrypsin-like activity. Plays a major role in the degradation of misfolded proteins. In Haemophilus influenzae (strain PittEE), this protein is ATP-dependent Clp protease proteolytic subunit.